A 358-amino-acid polypeptide reads, in one-letter code: Leukotriene B4 receptor 2 (358 aa).

The Extracellular portion of the chain corresponds to 1–24; the sequence is MSVCYRPPGNETLLSWKGSRATGT. N-linked (GlcNAc...) asparagine glycosylation occurs at N10. A helical transmembrane segment spans residues 25–45; sequence AFLLLAALLGLPGNGFVVWSL. The Cytoplasmic portion of the chain corresponds to 46–60; sequence AGWRPTAGRPLAATL. Residues 61–81 traverse the membrane as a helical segment; that stretch reads VLHLALADGAVLLLTPLFVAF. Residues 82 to 96 lie on the Extracellular side of the membrane; the sequence is LSRQAWPLGQVGCKA. The helical transmembrane segment at 97–117 threads the bilayer; the sequence is VYYVCALSMYASVLLTGLLSL. Residues 118–140 are Cytoplasmic-facing; sequence QRCLAVTRPFLAPRLRSPALARR. Residues 141 to 161 traverse the membrane as a helical segment; the sequence is LLLGVWLAALVLAVPAAVYRH. Over 162 to 185 the chain is Extracellular; sequence LWGDRVCQLCHPSAVHAAAHLSLE. Residues 186-206 traverse the membrane as a helical segment; it reads TLTAFVLPFGTVLGCYGVTLA. Residues 207–225 are Cytoplasmic-facing; it reads RLRGARWGSGRQGTRVGRL. The chain crosses the membrane as a helical span at residues 226–246; it reads VSAIVLAFGLLWAPYHAVNLL. The Extracellular portion of the chain corresponds to 247–275; sequence QAVAALAPPEGPLARLGGAGQAARAGTTA. A helical transmembrane segment spans residues 276 to 296; sequence LAFFSSSVNPVLYVFTAGDLL. Over 297–358 the chain is Cytoplasmic; sequence PRAGPRFLTR…GRMEKDSQEW (62 aa). The disordered stretch occupies residues 315-358; it reads RVGSRSREGTMELRTTPRLKVVGQGRGYGDPGGGGRMEKDSQEW. Residues 338–349 show a composition bias toward gly residues; the sequence is QGRGYGDPGGGG.

It belongs to the G-protein coupled receptor 1 family.

It localises to the cell membrane. Low-affinity receptor for leukotrienes including leukotriene B4. Mediates chemotaxis of granulocytes and macrophages. The response is mediated via G-proteins that activate a phosphatidylinositol-calcium second messenger system. The protein is Leukotriene B4 receptor 2 (Ltb4r2) of Rattus norvegicus (Rat).